The sequence spans 525 residues: GMP synthase [glutamine-hydrolyzing] (525 aa).

The Glutamine amidotransferase type-1 domain occupies 8–206; it reads PLLILDFGSQ…VVDICKAPTE (199 aa). The active-site Nucleophile is Cys85. Catalysis depends on residues His180 and Glu182. The region spanning 207 to 400 is the GMPS ATP-PPase domain; sequence WTPEHIIDEA…LGLPHDMVYR (194 aa). An ATP-binding site is contributed by 234–240; it reads SGGVDSS.

In terms of assembly, homodimer.

It catalyses the reaction XMP + L-glutamine + ATP + H2O = GMP + L-glutamate + AMP + diphosphate + 2 H(+). The protein operates within purine metabolism; GMP biosynthesis; GMP from XMP (L-Gln route): step 1/1. In terms of biological role, catalyzes the synthesis of GMP from XMP. The protein is GMP synthase [glutamine-hydrolyzing] of Legionella pneumophila (strain Corby).